The primary structure comprises 247 residues: Fibroblast growth factor 14 (247 aa).

2 disordered regions span residues 1–37 (MAAA…SKNR) and 216–247 (ETVP…CKTT). The span at 15 to 25 (QAREQHWDRPS) shows a compositional bias: basic and acidic residues.

Belongs to the heparin-binding growth factors family. In terms of assembly, interacts with SCN8A. As to expression, brain and testis; widely distributed in the developing nervous system. In adult, high levels in the granular layer of the cerebellum, less in hippocampus and olfactory bulb.

The protein resides in the nucleus. In terms of biological role, probably involved in nervous system development and function. This Mus musculus (Mouse) protein is Fibroblast growth factor 14 (Fgf14).